Here is a 406-residue protein sequence, read N- to C-terminus: uncharacterized protein (406 aa).

The next 5 helical transmembrane spans lie at 7–27 (LCTNPLIILIGTYMSIKYYLF), 31–51 (YFNIQFGLYVTFIISLLYGSV), 65–85 (LIFILHVLFVLICFSIKSEII), 92–112 (IFYFGFVKTIIISVVIGSFIL), and 191–211 (ISLIKMYLYSVIVPYAISSFF). The tract at residues 259-331 (TLNVPISTNN…TGTNNNVVDN (73 aa)) is disordered. Positions 262-291 (VPISTNNTDNLNSVKTNQQFNTPVAKSNTK) are enriched in polar residues. Over residues 292–303 (SNRRKKTGKKIR) the composition is skewed to basic residues. Low complexity predominate over residues 306 to 318 (NQTTSSNSSNNQS). Polar residues predominate over residues 319–330 (PESTGTNNNVVD).

It localises to the membrane. This is an uncharacterized protein from Acanthamoeba polyphaga (Amoeba).